The chain runs to 173 residues: NADH-ubiquinone oxidoreductase chain 6 (173 aa).

Transmembrane regions (helical) follow at residues 1–21 (MTYF…AVAS), 27–47 (YGVV…LSLG), 48–68 (VSFV…VVFV), 87–107 (VVGY…VGGF), and 139–159 (CGVG…FVVL).

It belongs to the complex I subunit 6 family.

It is found in the mitochondrion membrane. It catalyses the reaction a ubiquinone + NADH + 5 H(+)(in) = a ubiquinol + NAD(+) + 4 H(+)(out). Functionally, core subunit of the mitochondrial membrane respiratory chain NADH dehydrogenase (Complex I) that is believed to belong to the minimal assembly required for catalysis. Complex I functions in the transfer of electrons from NADH to the respiratory chain. The immediate electron acceptor for the enzyme is believed to be ubiquinone. The sequence is that of NADH-ubiquinone oxidoreductase chain 6 (MT-ND6) from Aethia pygmaea (Whiskered auklet).